Here is a 381-residue protein sequence, read N- to C-terminus: Protein-glutamate methylesterase/protein-glutamine glutaminase (381 aa).

Residues 8–125 form the Response regulatory domain; sequence QVLCIDDSAL…RDGMNEYADQ (118 aa). A 4-aspartylphosphate modification is found at D59. Residues 183 to 375 enclose the CheB-type methylesterase domain; the sequence is FSSTEKLIIV…PHVLARLSAH (193 aa). Catalysis depends on residues S195, H221, and D317.

It belongs to the CheB family. Phosphorylated by CheA. Phosphorylation of the N-terminal regulatory domain activates the methylesterase activity.

It localises to the cytoplasm. It catalyses the reaction [protein]-L-glutamate 5-O-methyl ester + H2O = L-glutamyl-[protein] + methanol + H(+). The catalysed reaction is L-glutaminyl-[protein] + H2O = L-glutamyl-[protein] + NH4(+). Its function is as follows. Involved in chemotaxis. Part of a chemotaxis signal transduction system that modulates chemotaxis in response to various stimuli. Catalyzes the demethylation of specific methylglutamate residues introduced into the chemoreceptors (methyl-accepting chemotaxis proteins or MCP) by CheR. Also mediates the irreversible deamidation of specific glutamine residues to glutamic acid. The sequence is that of Protein-glutamate methylesterase/protein-glutamine glutaminase from Ralstonia nicotianae (strain ATCC BAA-1114 / GMI1000) (Ralstonia solanacearum).